The following is a 253-amino-acid chain: Imidazole glycerol phosphate synthase subunit HisF (253 aa).

Active-site residues include Asp11 and Asp130.

Belongs to the HisA/HisF family. As to quaternary structure, heterodimer of HisH and HisF.

It is found in the cytoplasm. The catalysed reaction is 5-[(5-phospho-1-deoxy-D-ribulos-1-ylimino)methylamino]-1-(5-phospho-beta-D-ribosyl)imidazole-4-carboxamide + L-glutamine = D-erythro-1-(imidazol-4-yl)glycerol 3-phosphate + 5-amino-1-(5-phospho-beta-D-ribosyl)imidazole-4-carboxamide + L-glutamate + H(+). The protein operates within amino-acid biosynthesis; L-histidine biosynthesis; L-histidine from 5-phospho-alpha-D-ribose 1-diphosphate: step 5/9. IGPS catalyzes the conversion of PRFAR and glutamine to IGP, AICAR and glutamate. The HisF subunit catalyzes the cyclization activity that produces IGP and AICAR from PRFAR using the ammonia provided by the HisH subunit. In Acidobacterium capsulatum (strain ATCC 51196 / DSM 11244 / BCRC 80197 / JCM 7670 / NBRC 15755 / NCIMB 13165 / 161), this protein is Imidazole glycerol phosphate synthase subunit HisF.